The sequence spans 319 residues: Ribonuclease Z (319 aa).

Histidine 62, histidine 64, aspartate 66, histidine 67, histidine 145, aspartate 216, and histidine 274 together coordinate Zn(2+). Catalysis depends on aspartate 66, which acts as the Proton acceptor.

This sequence belongs to the RNase Z family. Homodimer. Zn(2+) serves as cofactor.

The enzyme catalyses Endonucleolytic cleavage of RNA, removing extra 3' nucleotides from tRNA precursor, generating 3' termini of tRNAs. A 3'-hydroxy group is left at the tRNA terminus and a 5'-phosphoryl group is left at the trailer molecule.. In terms of biological role, zinc phosphodiesterase, which displays some tRNA 3'-processing endonuclease activity. Probably involved in tRNA maturation, by removing a 3'-trailer from precursor tRNA. In Parasynechococcus marenigrum (strain WH8102), this protein is Ribonuclease Z.